The following is a 142-amino-acid chain: Translation initiation factor 2 subunit beta (142 aa).

Belongs to the eIF-2-beta/eIF-5 family. Heterotrimer composed of an alpha, a beta and a gamma chain.

Its function is as follows. eIF-2 functions in the early steps of protein synthesis by forming a ternary complex with GTP and initiator tRNA. This chain is Translation initiation factor 2 subunit beta, found in Staphylothermus marinus (strain ATCC 43588 / DSM 3639 / JCM 9404 / F1).